The following is a 668-amino-acid chain: Type II methyltransferase M.MwoI (668 aa).

It belongs to the N(4)/N(6)-methyltransferase family. N(4) subfamily.

The enzyme catalyses a 2'-deoxycytidine in DNA + S-adenosyl-L-methionine = an N(4)-methyl-2'-deoxycytidine in DNA + S-adenosyl-L-homocysteine + H(+). Its function is as follows. A beta subtype methylase, recognizes the double-stranded DNA sequence 5'-GCNNNNNNNGC-3', methylates C-2 on both strands, and protects the DNA from cleavage by the MwoI endonuclease. The protein is Type II methyltransferase M.MwoI of Methanothermobacter wolfeii (Methanobacterium wolfei).